We begin with the raw amino-acid sequence, 98 residues long: Large ribosomal subunit protein uL23 (98 aa).

This sequence belongs to the universal ribosomal protein uL23 family. Part of the 50S ribosomal subunit. Contacts protein L29, and trigger factor when it is bound to the ribosome.

Its function is as follows. One of the early assembly proteins it binds 23S rRNA. One of the proteins that surrounds the polypeptide exit tunnel on the outside of the ribosome. Forms the main docking site for trigger factor binding to the ribosome. The polypeptide is Large ribosomal subunit protein uL23 (Clostridium beijerinckii (strain ATCC 51743 / NCIMB 8052) (Clostridium acetobutylicum)).